Reading from the N-terminus, the 476-residue chain is 3-ketoacyl-CoA synthase 12 (476 aa).

Positions 1–25 are cleaved as a signal peptide; it reads MDLLFLFFSLLLSYLFFKIWKLIDS. In terms of domain architecture, FAE spans 26–313; sequence KQDKDCYILD…FMLKLLIKKI (288 aa). Residues cysteine 168, histidine 247, histidine 344, histidine 348, histidine 377, and asparagine 381 contribute to the active site.

The protein belongs to the thiolase-like superfamily. Chalcone/stilbene synthases family. Expressed in siliques, flowers and leaves.

The protein localises to the endoplasmic reticulum. It carries out the reaction a very-long-chain acyl-CoA + malonyl-CoA + H(+) = a very-long-chain 3-oxoacyl-CoA + CO2 + CoA. The protein operates within lipid metabolism; fatty acid biosynthesis. The polypeptide is 3-ketoacyl-CoA synthase 12 (Arabidopsis thaliana (Mouse-ear cress)).